Consider the following 953-residue polypeptide: UvrABC system protein A (953 aa).

Position 33–40 (33–40 (GLSGSGKS)) interacts with ATP. 2 consecutive ABC transporter domains span residues 320 to 599 (WGST…EESI) and 619 to 949 (GHDN…RYLK). 652-659 (GVSGSGKS) is an ATP binding site. Residues 752 to 778 (CEACQGDGLIKIEMHFLPDVYVKCDIC) form a C4-type zinc finger.

Belongs to the ABC transporter superfamily. UvrA family. As to quaternary structure, forms a heterotetramer with UvrB during the search for lesions.

It localises to the cytoplasm. The UvrABC repair system catalyzes the recognition and processing of DNA lesions. UvrA is an ATPase and a DNA-binding protein. A damage recognition complex composed of 2 UvrA and 2 UvrB subunits scans DNA for abnormalities. When the presence of a lesion has been verified by UvrB, the UvrA molecules dissociate. This is UvrABC system protein A from Rickettsia typhi (strain ATCC VR-144 / Wilmington).